Consider the following 82-residue polypeptide: U6 snRNA-associated Sm-like protein LSm6 (82 aa).

A Sm domain is found at 13–82; it reads DPSGFLSEII…GNNVMYISAD (70 aa).

This sequence belongs to the snRNP Sm proteins family. SmF/LSm6 subfamily. In terms of assembly, component of the heptameric LSM1-LSM7 complex, which consists of snr-1/lsm1, snr-2/lsm2, snr-3/lsm3, snr-4/lsm4, snr-5/lsm5, snr-6/lsm6 and snr-7/lsm7. Component of the heptameric LSM2-LSM8 complex, which consists of snr-2/lsm2, snr-3/lsm3, snr-4/lsm4, snr-5/lsm5, snr-6/lsm6, snr-7/lsm7 and snr-8/lsm8. The LSm subunits form a seven-membered ring structure with a doughnut shape.

It localises to the cytoplasm. Its subcellular location is the nucleus. Component of LSm protein complexes, which are involved in RNA processing and may function in a chaperone-like manner, facilitating the efficient association of RNA processing factors with their substrates. Component of the cytoplasmic LSM1-LSM7 complex, which is thought to be involved in mRNA degradation by activating the decapping step in the 5'-to-3' mRNA decay pathway. Component of the nuclear LSM2-LSM8 complex, which is involved in splicing of nuclear mRNAs. LSM2-LSM8 associates with multiple snRNP complexes containing the U6 snRNA (U4/U6 di-snRNP, spliceosomal U4/U6.U5 tri-snRNP, and free U6 snRNP). It binds directly to the 3'-terminal U-tract of U6 snRNA and plays a role in the biogenesis and stability of the U6 snRNP and U4/U6 snRNP complexes. LSM2-LSM8 probably also is involved degradation of nuclear pre-mRNA by targeting them for decapping, and in processing of pre-tRNAs, pre-rRNAs and U3 snoRNA. The protein is U6 snRNA-associated Sm-like protein LSm6 (snr-6) of Neurospora crassa (strain ATCC 24698 / 74-OR23-1A / CBS 708.71 / DSM 1257 / FGSC 987).